A 453-amino-acid polypeptide reads, in one-letter code: TATA box-binding protein-associated factor RNA polymerase I subunit A (453 aa).

In terms of assembly, component of the transcription factor SL1/TIF-IB complex, composed of TBP and at least TAF1A, TAF1B, TAF1C and TAF1D. In the complex interacts directly with TBP, TAF1A and TAF1B. Interaction of the SL1/TIF-IB subunits with TBP excludes interaction of TBP with the transcription factor IID (TFIID) subunits. Interacts with UBFT. Interacts with CEBPA (isoform 1 and isoform 4). Part of Pol I pre-initiation complex (PIC), in which Pol I core assembles with RRN3 and promoter-bound UTBF and SL1/TIF-IB complex.

It is found in the nucleus. The protein localises to the nucleolus. In terms of biological role, component of the transcription factor SL1/TIF-IB complex, which is involved in the assembly of the PIC (pre-initiation complex) during RNA polymerase I-dependent transcription. The rate of PIC formation probably is primarily dependent on the rate of association of SL1/TIF-IB with the rDNA promoter. SL1/TIF-IB is involved in stabilization of nucleolar transcription factor 1/UBTF on rDNA. Formation of SL1/TIF-IB excludes the association of TBP with TFIID subunits. In Mus musculus (Mouse), this protein is TATA box-binding protein-associated factor RNA polymerase I subunit A (Taf1a).